A 556-amino-acid chain; its full sequence is Dihydroxy-acid dehydratase (556 aa).

Residue Cys47 participates in [2Fe-2S] cluster binding. Asp79 contacts Mg(2+). Position 120 (Cys120) interacts with [2Fe-2S] cluster. Positions 121 and 122 each coordinate Mg(2+). An N6-carboxylysine modification is found at Lys122. Cys192 lines the [2Fe-2S] cluster pocket. Position 444 (Glu444) interacts with Mg(2+). Ser470 serves as the catalytic Proton acceptor.

It belongs to the IlvD/Edd family. In terms of assembly, homodimer. [2Fe-2S] cluster serves as cofactor. The cofactor is Mg(2+).

It catalyses the reaction (2R)-2,3-dihydroxy-3-methylbutanoate = 3-methyl-2-oxobutanoate + H2O. The catalysed reaction is (2R,3R)-2,3-dihydroxy-3-methylpentanoate = (S)-3-methyl-2-oxopentanoate + H2O. It functions in the pathway amino-acid biosynthesis; L-isoleucine biosynthesis; L-isoleucine from 2-oxobutanoate: step 3/4. Its pathway is amino-acid biosynthesis; L-valine biosynthesis; L-valine from pyruvate: step 3/4. Its function is as follows. Functions in the biosynthesis of branched-chain amino acids. Catalyzes the dehydration of (2R,3R)-2,3-dihydroxy-3-methylpentanoate (2,3-dihydroxy-3-methylvalerate) into 2-oxo-3-methylpentanoate (2-oxo-3-methylvalerate) and of (2R)-2,3-dihydroxy-3-methylbutanoate (2,3-dihydroxyisovalerate) into 2-oxo-3-methylbutanoate (2-oxoisovalerate), the penultimate precursor to L-isoleucine and L-valine, respectively. This chain is Dihydroxy-acid dehydratase, found in Prochlorococcus marinus (strain NATL2A).